A 101-amino-acid polypeptide reads, in one-letter code: Small ribosomal subunit protein uS14 (101 aa).

Residues 1–21 (MAKTSAVEKNKRRRKSVAQQA) are disordered.

It belongs to the universal ribosomal protein uS14 family. In terms of assembly, part of the 30S ribosomal subunit. Contacts proteins S3 and S10.

Functionally, binds 16S rRNA, required for the assembly of 30S particles and may also be responsible for determining the conformation of the 16S rRNA at the A site. This Agrobacterium fabrum (strain C58 / ATCC 33970) (Agrobacterium tumefaciens (strain C58)) protein is Small ribosomal subunit protein uS14.